We begin with the raw amino-acid sequence, 275 residues long: Large ribosomal subunit protein uL2c (275 aa).

The disordered stretch occupies residues 28–53; sequence TPTKSLTHANHRARGRNHSGSITTRW.

It belongs to the universal ribosomal protein uL2 family. As to quaternary structure, part of the 50S ribosomal subunit.

It is found in the plastid. The protein localises to the chloroplast. The protein is Large ribosomal subunit protein uL2c (rpl2) of Nephroselmis olivacea (Green alga).